We begin with the raw amino-acid sequence, 332 residues long: Zinc finger protein CONSTANS-LIKE 13 (332 aa).

Zn(2+) contacts are provided by cysteine 13, cysteine 16, cysteine 36, histidine 41, cysteine 56, cysteine 59, cysteine 79, and histidine 84. The B box-type 1; atypical zinc finger occupies cysteine 13–leucine 55. A B box-type 2; atypical zinc finger spans residues cysteine 56 to phenylalanine 96. In terms of domain architecture, CCT spans arginine 287 to alanine 329.

Belongs to the CONSTANS family.

It is found in the nucleus. This chain is Zinc finger protein CONSTANS-LIKE 13 (COL13), found in Arabidopsis thaliana (Mouse-ear cress).